A 292-amino-acid chain; its full sequence is Acetyl-coenzyme A carboxylase carboxyl transferase subunit beta (292 aa).

The CoA carboxyltransferase N-terminal domain occupies Leu-29 to Ser-292. Zn(2+)-binding residues include Cys-33, Cys-36, Cys-52, and Cys-55. A C4-type zinc finger spans residues Cys-33–Cys-55.

It belongs to the AccD/PCCB family. In terms of assembly, acetyl-CoA carboxylase is a heterohexamer composed of biotin carboxyl carrier protein (AccB), biotin carboxylase (AccC) and two subunits each of ACCase subunit alpha (AccA) and ACCase subunit beta (AccD). Zn(2+) serves as cofactor.

It localises to the cytoplasm. The catalysed reaction is N(6)-carboxybiotinyl-L-lysyl-[protein] + acetyl-CoA = N(6)-biotinyl-L-lysyl-[protein] + malonyl-CoA. The protein operates within lipid metabolism; malonyl-CoA biosynthesis; malonyl-CoA from acetyl-CoA: step 1/1. Functionally, component of the acetyl coenzyme A carboxylase (ACC) complex. Biotin carboxylase (BC) catalyzes the carboxylation of biotin on its carrier protein (BCCP) and then the CO(2) group is transferred by the transcarboxylase to acetyl-CoA to form malonyl-CoA. The protein is Acetyl-coenzyme A carboxylase carboxyl transferase subunit beta of Synechococcus sp. (strain CC9311).